Consider the following 197-residue polypeptide: Ribosome maturation factor RimP (197 aa).

This sequence belongs to the RimP family.

The protein localises to the cytoplasm. Its function is as follows. Required for maturation of 30S ribosomal subunits. This chain is Ribosome maturation factor RimP, found in Acidovorax sp. (strain JS42).